We begin with the raw amino-acid sequence, 35 residues long: LAGGLTEPRPADTEIQEIANKVKPQLEEKTNKKYD.

Positions 1–35 are disordered; it reads LAGGLTEPRPADTEIQEIANKVKPQLEEKTNKKYD. Residues 24-35 show a composition bias toward basic and acidic residues; the sequence is PQLEEKTNKKYD.

Belongs to the cystatin family.

The protein resides in the cytoplasm. In terms of biological role, potent inhibitor of cathepsins L and S, and papain. The polypeptide is Leukocyte cysteine proteinase inhibitor 2 (Sus scrofa (Pig)).